Here is a 210-residue protein sequence, read N- to C-terminus: Small ribosomal subunit protein uS3 (210 aa).

In terms of domain architecture, KH type-2 spans 39–107; sequence IREKLMEKLK…EILLDIQEVK (69 aa).

This sequence belongs to the universal ribosomal protein uS3 family. In terms of assembly, part of the 30S ribosomal subunit. Forms a tight complex with proteins S10 and S14.

Functionally, binds the lower part of the 30S subunit head. Binds mRNA in the 70S ribosome, positioning it for translation. This chain is Small ribosomal subunit protein uS3, found in Opitutus terrae (strain DSM 11246 / JCM 15787 / PB90-1).